The following is an 82-amino-acid chain: Large ribosomal subunit protein bL31 (82 aa).

C16, C18, C37, and C40 together coordinate Zn(2+).

This sequence belongs to the bacterial ribosomal protein bL31 family. Type A subfamily. Part of the 50S ribosomal subunit. Zn(2+) serves as cofactor.

Its function is as follows. Binds the 23S rRNA. This chain is Large ribosomal subunit protein bL31, found in Blochmanniella pennsylvanica (strain BPEN).